The sequence spans 389 residues: Apicidin F cluster transcription factor apf2 (389 aa).

2 stretches are compositionally biased toward polar residues: residues 1-13 and 75-84; these read MSPP…TITD and PDSATPKPSL. 3 disordered regions span residues 1–27, 65–84, and 219–239; these read MSPP…VAQR, PQSV…KPSL, and EVPN…TKQP. The basic DNA-binding region stretch occupies residues 12-38; it reads TDANERRKAQNRVAQRNYRSRQKLRVE. ANK repeat units follow at residues 241-270, 274-303, 307-336, and 357-386; these read EFKT…NIDT, HGRT…DLLM, SGVT…QQDR, and QNMT…DVNI.

The protein belongs to the bZIP family. Highly divergent.

It localises to the nucleus. Functionally, transcription factor that regulates the expression of the gene cluster that mediates the biosynthesis of apicidin F. Binds to the eight-base-pair motif 5'-TGACGTGA-3' called the 'Api-box' that is found in all promoters of the apicidin F cluster except in the promoter region of apf2 itself. This is Apicidin F cluster transcription factor apf2 from Gibberella fujikuroi (strain CBS 195.34 / IMI 58289 / NRRL A-6831) (Bakanae and foot rot disease fungus).